The primary structure comprises 575 residues: Proline--tRNA ligase (575 aa).

Belongs to the class-II aminoacyl-tRNA synthetase family. ProS type 1 subfamily. In terms of assembly, homodimer.

It localises to the cytoplasm. It carries out the reaction tRNA(Pro) + L-proline + ATP = L-prolyl-tRNA(Pro) + AMP + diphosphate. In terms of biological role, catalyzes the attachment of proline to tRNA(Pro) in a two-step reaction: proline is first activated by ATP to form Pro-AMP and then transferred to the acceptor end of tRNA(Pro). As ProRS can inadvertently accommodate and process non-cognate amino acids such as alanine and cysteine, to avoid such errors it has two additional distinct editing activities against alanine. One activity is designated as 'pretransfer' editing and involves the tRNA(Pro)-independent hydrolysis of activated Ala-AMP. The other activity is designated 'posttransfer' editing and involves deacylation of mischarged Ala-tRNA(Pro). The misacylated Cys-tRNA(Pro) is not edited by ProRS. The sequence is that of Proline--tRNA ligase from Pseudothermotoga lettingae (strain ATCC BAA-301 / DSM 14385 / NBRC 107922 / TMO) (Thermotoga lettingae).